Reading from the N-terminus, the 430-residue chain is Agropine synthesis reductase (430 aa).

203–227 (LISGPSRGIGKAIAENLIAHGYRMS) lines the NAD(+) pocket. A substrate-binding site is contributed by serine 333. Catalysis depends on tyrosine 346, which acts as the Proton acceptor.

It belongs to the short-chain dehydrogenases/reductases (SDR) family.

It participates in opine metabolism; mannopine biosynthesis. Reduces deoxy-fructosyl-glutamine to mannopine. The chain is Agropine synthesis reductase (mas1) from Rhizobium rhizogenes (Agrobacterium rhizogenes).